A 463-amino-acid polypeptide reads, in one-letter code: L-seryl-tRNA(Sec) selenium transferase (463 aa).

Lys-295 is subject to N6-(pyridoxal phosphate)lysine.

Belongs to the SelA family. As to quaternary structure, homodecamer; pentamer of dimers. Binds only one seryl-tRNA(Sec) per dimer. The cofactor is pyridoxal 5'-phosphate.

It localises to the cytoplasm. The catalysed reaction is L-seryl-tRNA(Sec) + selenophosphate + H(+) = L-selenocysteinyl-tRNA(Sec) + phosphate. The protein operates within aminoacyl-tRNA biosynthesis; selenocysteinyl-tRNA(Sec) biosynthesis; selenocysteinyl-tRNA(Sec) from L-seryl-tRNA(Sec) (bacterial route): step 1/1. In terms of biological role, converts seryl-tRNA(Sec) to selenocysteinyl-tRNA(Sec) required for selenoprotein biosynthesis. The protein is L-seryl-tRNA(Sec) selenium transferase of Shigella boydii serotype 4 (strain Sb227).